A 957-amino-acid polypeptide reads, in one-letter code: Mediator of RNA polymerase II transcription subunit 16 (957 aa).

A disordered region spans residues 855-883 (YTEVDAAPSGKTNAQGPPQQPQPQQQRRR).

This sequence belongs to the Mediator complex subunit 16 family. As to quaternary structure, component of the Mediator complex.

Its subcellular location is the nucleus. Its function is as follows. Component of the Mediator complex, a coactivator involved in the regulated transcription of nearly all RNA polymerase II-dependent genes. Mediator functions as a bridge to convey information from gene-specific regulatory proteins to the basal RNA polymerase II transcription machinery. Mediator is recruited to promoters by direct interactions with regulatory proteins and serves as a scaffold for the assembly of a functional preinitiation complex with RNA polymerase II and the general transcription factors. This is Mediator of RNA polymerase II transcription subunit 16 (sin4) from Aspergillus clavatus (strain ATCC 1007 / CBS 513.65 / DSM 816 / NCTC 3887 / NRRL 1 / QM 1276 / 107).